The following is a 606-amino-acid chain: Elongation factor 4 (606 aa).

A tr-type G domain is found at 11–193 (PHIRNFSIIA…RLVRDVPPPK (183 aa)). GTP is bound by residues 23–28 (DHGKST) and 140–143 (NKMD).

Belongs to the TRAFAC class translation factor GTPase superfamily. Classic translation factor GTPase family. LepA subfamily.

It is found in the cell inner membrane. The catalysed reaction is GTP + H2O = GDP + phosphate + H(+). In terms of biological role, required for accurate and efficient protein synthesis under certain stress conditions. May act as a fidelity factor of the translation reaction, by catalyzing a one-codon backward translocation of tRNAs on improperly translocated ribosomes. Back-translocation proceeds from a post-translocation (POST) complex to a pre-translocation (PRE) complex, thus giving elongation factor G a second chance to translocate the tRNAs correctly. Binds to ribosomes in a GTP-dependent manner. This Chromohalobacter salexigens (strain ATCC BAA-138 / DSM 3043 / CIP 106854 / NCIMB 13768 / 1H11) protein is Elongation factor 4.